The following is a 317-amino-acid chain: Beta-ketoacyl-[acyl-carrier-protein] synthase III (317 aa).

Active-site residues include Cys112 and His244. Residues 245–249 (QANLR) are ACP-binding. Residue Asn274 is part of the active site.

The protein belongs to the thiolase-like superfamily. FabH family. As to quaternary structure, homodimer.

Its subcellular location is the cytoplasm. The enzyme catalyses malonyl-[ACP] + acetyl-CoA + H(+) = 3-oxobutanoyl-[ACP] + CO2 + CoA. It functions in the pathway lipid metabolism; fatty acid biosynthesis. Its function is as follows. Catalyzes the condensation reaction of fatty acid synthesis by the addition to an acyl acceptor of two carbons from malonyl-ACP. Catalyzes the first condensation reaction which initiates fatty acid synthesis and may therefore play a role in governing the total rate of fatty acid production. Possesses both acetoacetyl-ACP synthase and acetyl transacylase activities. Its substrate specificity determines the biosynthesis of branched-chain and/or straight-chain of fatty acids. The protein is Beta-ketoacyl-[acyl-carrier-protein] synthase III of Aliivibrio fischeri (strain ATCC 700601 / ES114) (Vibrio fischeri).